Here is a 580-residue protein sequence, read N- to C-terminus: Arginine--tRNA ligase (580 aa).

The 'HIGH' region signature appears at 131–141 (ANPTGPMHVGH).

The protein belongs to the class-I aminoacyl-tRNA synthetase family. In terms of assembly, monomer.

It localises to the cytoplasm. It catalyses the reaction tRNA(Arg) + L-arginine + ATP = L-arginyl-tRNA(Arg) + AMP + diphosphate. The chain is Arginine--tRNA ligase from Cereibacter sphaeroides (strain KD131 / KCTC 12085) (Rhodobacter sphaeroides).